A 592-amino-acid polypeptide reads, in one-letter code: Protein kinase C zeta type (592 aa).

Residues 15 to 98 (RVRLKAHYGG…EVLIIHVFPS (84 aa)) form the PB1 domain. The segment at 79–145 (AFRLACQGRD…KRFNRRAYCG (67 aa)) is interaction with SQSTM1. A Phorbol-ester/DAG-type zinc finger spans residues 130 to 180 (GHLFQAKRFNRRAYCGQCSERIWGLARQGYRCINCKLLVHKRCHVLVPLTC). The Protein kinase domain occupies 252–518 (FDLIRVIGRG…FSDIKSHAFF (267 aa)). Residues 258-266 (IGRGSYAKV) and Lys281 each bind ATP. Asp376 serves as the catalytic Proton acceptor. Thr410 is subject to Phosphothreonine; by PDPK1 and PI3K. Residues 519 to 590 (RSIDWDLLEK…INPLLLSAEE (72 aa)) enclose the AGC-kinase C-terminal domain. The residue at position 560 (Thr560) is a Phosphothreonine. Ser591 bears the Phosphoserine mark.

It belongs to the protein kinase superfamily. AGC Ser/Thr protein kinase family. PKC subfamily. As to quaternary structure, interacts with PARD6A, PARD6B and PARD6G. Part of a complex with PARD3, PARD6A or PARD6B or PARD6G and CDC42 or RAC1. Interacts with ADAP1/CENTA1. Forms a ternary complex with SQSTM1 and KCNAB2. Forms another ternary complex with SQSTM1 and GABRR3. Forms a complex with SQSTM1 and MAP2K5. Interacts (via the protein kinase domain) with WWC1. Forms a tripartite complex with WWC1 and DDR1, but predominantly in the absence of collagen. Component of the Par polarity complex, composed of at least phosphorylated PRKCZ, PARD3 and TIAM1. Interacts with PDPK1 (via N-terminal region). Interacts with WDFY2 (via WD repeats 1-3). Interacts with VAMP2. Forms a complex with WDFY2 and VAMP2. Interacts with APPL1. Interacts with WWC1, WWC2 and WWC3. Post-translationally, CDH5 is required for its phosphorylation at Thr-410. Phosphorylated by protein kinase PDPK1; phosphorylation is inhibited by the apoptotic C-terminal cleavage product of PKN2. Phosphorylation at Thr-410 by PI3K activates the kinase. In terms of tissue distribution, isoform 1: In brain, expressed in hippocampus, neocortex and cerebellum (at protein level). Also expressed in lung, liver, kidney, testis and to a lesser extent in pancreas, intestine and skin (at protein level). Isoform 2: Specifically expressed in brain where it localizes to the hippocampus, neocortex and cerebellum (at protein level).

Its subcellular location is the cytoplasm. The protein localises to the endosome. It is found in the cell junction. The protein resides in the membrane. It carries out the reaction L-seryl-[protein] + ATP = O-phospho-L-seryl-[protein] + ADP + H(+). The enzyme catalyses L-threonyl-[protein] + ATP = O-phospho-L-threonyl-[protein] + ADP + H(+). Its activity is regulated as follows. Atypical PKCs (PRKCI and PRKCZ) exhibit an elevated basal enzymatic activity (that may be due to the interaction with SMG1 or SQSTM1) and are not regulated by diacylglycerol, phosphatidylserine, phorbol esters or calcium ions. Two specific sites, Thr-410 (activation loop of the kinase domain) and Thr-560 (turn motif), need to be phosphorylated for its full activation. Phosphatidylinositol 3,4,5-trisphosphate might be a physiological activator. Isoform 2: Constitutively active. In terms of biological role, calcium- and diacylglycerol-independent serine/threonine-protein kinase that functions in phosphatidylinositol 3-kinase (PI3K) pathway and mitogen-activated protein (MAP) kinase cascade, and is involved in NF-kappa-B activation, mitogenic signaling, cell proliferation, cell polarity, inflammatory response and maintenance of long-term potentiation (LTP). Upon lipopolysaccharide (LPS) treatment in macrophages, or following mitogenic stimuli, functions downstream of PI3K to activate MAP2K1/MEK1-MAPK1/ERK2 signaling cascade independently of RAF1 activation. Required for insulin-dependent activation of AKT3, but may function as an adapter rather than a direct activator. Upon insulin treatment may act as a downstream effector of PI3K and contribute to the activation of translocation of the glucose transporter SLC2A4/GLUT4 and subsequent glucose transport in adipocytes. In EGF-induced cells, binds and activates MAP2K5/MEK5-MAPK7/ERK5 independently of its kinase activity and can activate JUN promoter through MEF2C. Through binding with SQSTM1/p62, functions in interleukin-1 signaling and activation of NF-kappa-B with the specific adapters RIPK1 and TRAF6. Participates in TNF-dependent transactivation of NF-kappa-B by phosphorylating and activating IKBKB kinase, which in turn leads to the degradation of NF-kappa-B inhibitors. In migrating astrocytes, forms a cytoplasmic complex with PARD6A and is recruited by CDC42 to function in the establishment of cell polarity along with the microtubule motor and dynein. In association with FEZ1, stimulates neuronal differentiation in PC12 cells. In the inflammatory response, is required for the T-helper 2 (Th2) differentiation process, including interleukin production, efficient activation of JAK1 and the subsequent phosphorylation and nuclear translocation of STAT6. May be involved in development of allergic airway inflammation (asthma), a process dependent on Th2 immune response. In the NF-kappa-B-mediated inflammatory response, can relieve SETD6-dependent repression of NF-kappa-B target genes by phosphorylating the RELA subunit at 'Ser-311'. Phosphorylates VAMP2 in vitro. Phosphorylates and activates LRRK1, which phosphorylates RAB proteins involved in intracellular trafficking. Functionally, involved in late synaptic long term potentiation phase in CA1 hippocampal cells and long term memory maintenance. This chain is Protein kinase C zeta type (Prkcz), found in Rattus norvegicus (Rat).